We begin with the raw amino-acid sequence, 485 residues long: Glutamyl-tRNA(Gln) amidotransferase subunit A (485 aa).

Catalysis depends on charge relay system residues Lys79 and Ser154. The active-site Acyl-ester intermediate is the Ser178.

The protein belongs to the amidase family. GatA subfamily. Heterotrimer of A, B and C subunits.

It carries out the reaction L-glutamyl-tRNA(Gln) + L-glutamine + ATP + H2O = L-glutaminyl-tRNA(Gln) + L-glutamate + ADP + phosphate + H(+). Functionally, allows the formation of correctly charged Gln-tRNA(Gln) through the transamidation of misacylated Glu-tRNA(Gln) in organisms which lack glutaminyl-tRNA synthetase. The reaction takes place in the presence of glutamine and ATP through an activated gamma-phospho-Glu-tRNA(Gln). The sequence is that of Glutamyl-tRNA(Gln) amidotransferase subunit A from Staphylococcus saprophyticus subsp. saprophyticus (strain ATCC 15305 / DSM 20229 / NCIMB 8711 / NCTC 7292 / S-41).